Reading from the N-terminus, the 447-residue chain is Probable glycine dehydrogenase (decarboxylating) subunit 1 (447 aa).

It belongs to the GcvP family. N-terminal subunit subfamily. In terms of assembly, the glycine cleavage system is composed of four proteins: P, T, L and H. In this organism, the P 'protein' is a heterodimer of two subunits.

It carries out the reaction N(6)-[(R)-lipoyl]-L-lysyl-[glycine-cleavage complex H protein] + glycine + H(+) = N(6)-[(R)-S(8)-aminomethyldihydrolipoyl]-L-lysyl-[glycine-cleavage complex H protein] + CO2. In terms of biological role, the glycine cleavage system catalyzes the degradation of glycine. The P protein binds the alpha-amino group of glycine through its pyridoxal phosphate cofactor; CO(2) is released and the remaining methylamine moiety is then transferred to the lipoamide cofactor of the H protein. The sequence is that of Probable glycine dehydrogenase (decarboxylating) subunit 1 from Bacillus cereus (strain ATCC 10987 / NRS 248).